We begin with the raw amino-acid sequence, 325 residues long: Holliday junction branch migration complex subunit RuvB (325 aa).

The interval 1–181 (MENRLINPVE…FGIVQRLEFY (181 aa)) is large ATPase domain (RuvB-L). Residues isoleucine 20, arginine 21, glycine 62, lysine 65, threonine 66, threonine 67, 128–130 (EDF), arginine 171, tyrosine 181, and arginine 218 contribute to the ATP site. Residue threonine 66 coordinates Mg(2+). The segment at 182 to 252 (NIEDLTTIVS…IADSALDMLA (71 aa)) is small ATPAse domain (RuvB-S). The tract at residues 255-325 (RRGLDHLDRR…VLTQMAIDQL (71 aa)) is head domain (RuvB-H). Arginine 291, arginine 310, and arginine 315 together coordinate DNA.

This sequence belongs to the RuvB family. Homohexamer. Forms an RuvA(8)-RuvB(12)-Holliday junction (HJ) complex. HJ DNA is sandwiched between 2 RuvA tetramers; dsDNA enters through RuvA and exits via RuvB. An RuvB hexamer assembles on each DNA strand where it exits the tetramer. Each RuvB hexamer is contacted by two RuvA subunits (via domain III) on 2 adjacent RuvB subunits; this complex drives branch migration. In the full resolvosome a probable DNA-RuvA(4)-RuvB(12)-RuvC(2) complex forms which resolves the HJ.

It localises to the cytoplasm. The catalysed reaction is ATP + H2O = ADP + phosphate + H(+). Its function is as follows. The RuvA-RuvB-RuvC complex processes Holliday junction (HJ) DNA during genetic recombination and DNA repair, while the RuvA-RuvB complex plays an important role in the rescue of blocked DNA replication forks via replication fork reversal (RFR). RuvA specifically binds to HJ cruciform DNA, conferring on it an open structure. The RuvB hexamer acts as an ATP-dependent pump, pulling dsDNA into and through the RuvAB complex. RuvB forms 2 homohexamers on either side of HJ DNA bound by 1 or 2 RuvA tetramers; 4 subunits per hexamer contact DNA at a time. Coordinated motions by a converter formed by DNA-disengaged RuvB subunits stimulates ATP hydrolysis and nucleotide exchange. Immobilization of the converter enables RuvB to convert the ATP-contained energy into a lever motion, pulling 2 nucleotides of DNA out of the RuvA tetramer per ATP hydrolyzed, thus driving DNA branch migration. The RuvB motors rotate together with the DNA substrate, which together with the progressing nucleotide cycle form the mechanistic basis for DNA recombination by continuous HJ branch migration. Branch migration allows RuvC to scan DNA until it finds its consensus sequence, where it cleaves and resolves cruciform DNA. The chain is Holliday junction branch migration complex subunit RuvB from Psychrobacter sp. (strain PRwf-1).